The chain runs to 613 residues: MSEPAAEVPEPMEDCGQDASAVPSSAAPLCQKEEAGPGPAAGPGTQPGLYSYIRDDLFTSEIFKLELQNVPRHASFSDVRRFLGRFGLQSHKIKLFGQPPCAFVTFRSAAERDKALRVLHGALWKGCPLSVRLARPKADPMARKRRQEGDSEPSVTQIADVVTPLWTVPYTEQLEQKRLECERVLQKLAKEIGNTNRALLPWLLLQRQQHNKACCPLEGVKPSPQQTEYRNKCEFLVGVGVDGKDNTVGCRLGKYKGGTCAVAAPFDTVHIPEATKQVVKAFQEFIRSTPYSAYDPETYTGHWKQLTVRTSSRGQAMAIAYFHPQKLSSEEVAGLKASLVCHFMEGPGKASGVTSLYFVEEGQRKTPSQEGLPLEHMAGDQCIQEDLLGLTFRISPHAFFQVNTPAAEVLYTVIQEWAQLDGGSTVLDVCCGTGTIGLALAPKVKRVVGIELCQEAVEDARMNALTNELSNVEFHCGRAEDLVPGLVSRLSSHQLVAVLDPPRAGLHSKVILAIRKAENIKRLLYVSCNPRAAMGNFVDLCRAPSNRVKGTPFHPVKAVAVDLFPQTPHCEMLILFERMQQHPNGIEALEHQEFQTPRNLPDITPQETEISLS.

Residues 1 to 46 (MSEPAAEVPEPMEDCGQDASAVPSSAAPLCQKEEAGPGPAAGPGTQ) are disordered. The RRM domain maps to 63–136 (FKLELQNVPR…CPLSVRLARP (74 aa)). Residues 170-200 (YTEQLEQKRLECERVLQKLAKEIGNTNRALL) are a coiled coil. The residue at position 368 (S368) is a Phosphoserine. 3 residues coordinate S-adenosyl-L-methionine: Q401, E451, and D500. Catalysis depends on C528, which acts as the Nucleophile. The active-site Proton acceptor is the E571.

Belongs to the class I-like SAM-binding methyltransferase superfamily. RNA M5U methyltransferase family. As to expression, widely expressed at low level. Expressed at higher level in proliferating cells.

Its subcellular location is the cytoplasm. The protein localises to the cytosol. The enzyme catalyses uridine(54) in tRNA + S-adenosyl-L-methionine = 5-methyluridine(54) in tRNA + S-adenosyl-L-homocysteine + H(+). The catalysed reaction is a uridine in mRNA + S-adenosyl-L-methionine = a 5-methyluridine in mRNA + S-adenosyl-L-homocysteine + H(+). S-adenosyl-L-methionine-dependent methyltransferase that catalyzes the formation of 5-methyl-uridine in tRNAs and some mRNAs. Mainly catalyzes the methylation of uridine at position 54 (m5U54) in cytosolic tRNAs. Also able to mediate the formation of 5-methyl-uridine in some mRNAs. This is tRNA (uracil-5-)-methyltransferase homolog A from Mus musculus (Mouse).